The primary structure comprises 142 residues: Large-conductance mechanosensitive channel (142 aa).

Helical transmembrane passes span 10-30 (FAIKGNVIDLAVGVIIGAAFS) and 86-106 (GNFITVAVNFAILAFIIFLMV).

It belongs to the MscL family. As to quaternary structure, homopentamer.

It is found in the cell inner membrane. Its function is as follows. Channel that opens in response to stretch forces in the membrane lipid bilayer. May participate in the regulation of osmotic pressure changes within the cell. The chain is Large-conductance mechanosensitive channel from Polaromonas naphthalenivorans (strain CJ2).